A 206-amino-acid polypeptide reads, in one-letter code: Large ribosomal subunit protein uL4 (206 aa).

Residues 43 to 78 (ARSGNRAQKDREQVKHTTKKPWRQKGTGRARAGMSS) are disordered. Residues 58–70 (HTTKKPWRQKGTG) show a composition bias toward basic residues.

It belongs to the universal ribosomal protein uL4 family. As to quaternary structure, part of the 50S ribosomal subunit.

Functionally, one of the primary rRNA binding proteins, this protein initially binds near the 5'-end of the 23S rRNA. It is important during the early stages of 50S assembly. It makes multiple contacts with different domains of the 23S rRNA in the assembled 50S subunit and ribosome. Its function is as follows. Forms part of the polypeptide exit tunnel. This Polynucleobacter necessarius subsp. necessarius (strain STIR1) protein is Large ribosomal subunit protein uL4.